The primary structure comprises 253 residues: MPAAIRALIAGNWKMNGLKAQLAEFEAMLAGAPALADKADLLVCPPATLLHAFGQKLGNGARSFAVGAQDCHANVSGAHTGDLSAEMLVDAGASAIIVGHSERRADHGETDSVVRAKAEAAWRAGAVAIVCVGETQAERDAGQTLDVVGRQLAGSLPDGATAENTVVAYEPVWAIGTGLTPTANDVEQVHKFIRDCLTKRFGGEGAAVRILYGGSVKPSNAKELMAVPEVNGALVGGASLKAADFLAIAAGCP.

12–14 (NWK) serves as a coordination point for substrate. Residue histidine 100 is the Electrophile of the active site. Residue glutamate 170 is the Proton acceptor of the active site. Substrate-binding positions include glycine 176, serine 215, and 236–237 (GG).

This sequence belongs to the triosephosphate isomerase family. As to quaternary structure, homodimer.

The protein localises to the cytoplasm. The enzyme catalyses D-glyceraldehyde 3-phosphate = dihydroxyacetone phosphate. The protein operates within carbohydrate biosynthesis; gluconeogenesis. Its pathway is carbohydrate degradation; glycolysis; D-glyceraldehyde 3-phosphate from glycerone phosphate: step 1/1. Involved in the gluconeogenesis. Catalyzes stereospecifically the conversion of dihydroxyacetone phosphate (DHAP) to D-glyceraldehyde-3-phosphate (G3P). The protein is Triosephosphate isomerase of Rhodopseudomonas palustris (strain BisA53).